A 601-amino-acid polypeptide reads, in one-letter code: Potassium voltage-gated channel subfamily A member 5 (601 aa).

The tetramerization domain stretch occupies residues 1-200 (MEIALVPLEN…FYQLGDEAME (200 aa)). At 1-236 (MEIALVPLEN…LIFEYPESSG (236 aa)) the chain is on the cytoplasmic side. Residues 19–93 (GGEAGTGCSQ…DEEGEGDPAL (75 aa)) form a disordered region. A compositionally biased stretch (pro residues) spans 65–74 (RPLPPLPQDP). K210 is covalently cross-linked (Glycyl lysine isopeptide (Lys-Gly) (interchain with G-Cter in SUMO)). Residues 237–258 (SARGIAIVSVLVILISIITFCL) form a helical membrane-spanning segment. Residues 259 to 312 (ETLPEFRDERELLRHPPVPHQPLGPSRGANGSGPLAPPSGPTVAPLLPRTLADP) lie on the Extracellular side of the membrane. The tract at residues 275–297 (PVPHQPLGPSRGANGSGPLAPPS) is disordered. N288 carries an N-linked (GlcNAc...) asparagine glycan. The helical transmembrane segment at 313–334 (FFIVETTCVIWFTFELLVRFFA) threads the bilayer. C335 carries the S-palmitoyl cysteine lipid modification. The Cytoplasmic portion of the chain corresponds to 335-345 (CPSKAEFSRNI). Residues 346 to 366 (MNIIDVVAIFPYFITLGTELA) form a helical membrane-spanning segment. Topologically, residues 367–383 (EQPGGGGGGQNGQQAMS) are extracellular. A helical; Voltage-sensor membrane pass occupies residues 384–404 (LAILRVIRLVRVFRIFKLSRH). The Cytoplasmic portion of the chain corresponds to 405–419 (SKGLQILGKTLQASM). An S4-S5 linker region spans residues 406–419 (KGLQILGKTLQASM). Residues 420–441 (RELGLLIFFLFIGVILFSSAVY) form a helical membrane-spanning segment. Residues 442-455 (FAEADNQETHFSSI) are Extracellular-facing. Residues 456-467 (PDAFWWAVVTMT) constitute an intramembrane region (helical). The Selectivity filter motif lies at 468–473 (TVGYGD). Residues 468–475 (TVGYGDMR) lie within the membrane without spanning it. Residues 476-482 (PVTVGGK) are Extracellular-facing. The chain crosses the membrane as a helical span at residues 483-511 (IVGSLCAIAGVLTIALPVPVIVSNFNYFY). Over 512 to 601 (HRETDHEEQA…CLDTSRETDL (90 aa)) the chain is Cytoplasmic. The disordered stretch occupies residues 521 to 545 (AALKEEQGSQSHGTGLDSGGPRKAS). K524 is covalently cross-linked (Glycyl lysine isopeptide (Lys-Gly) (interchain with G-Cter in SUMO)). The PDZ-binding motif lies at 599–601 (TDL).

Belongs to the potassium channel family. A (Shaker) (TC 1.A.1.2) subfamily. Kv1.5/KCNA5 sub-subfamily. Homotetramer and heterotetramer of potassium channel proteins. Interacts with DLG1, which enhances channel currents. Forms a ternary complex with DLG1 and CAV3. Interacts with KCNAB1. Interacts with UBE2I. Interacts with XIRP2; the interaction is required for normal action potential configuration in the heart. Post-translationally, glycosylated. Sumoylated on Lys-210, and Lys-524, preferentially with SUMO3. Sumoylation regulates the voltage sensitivity of the channel.

The protein resides in the cell membrane. It carries out the reaction K(+)(in) = K(+)(out). In terms of biological role, voltage-gated potassium channel that mediates transmembrane potassium transport in excitable membranes. Forms tetrameric potassium-selective channels through which potassium ions pass in accordance with their electrochemical gradient. The channel alternates between opened and closed conformations in response to the voltage difference across the membrane. Can form functional homotetrameric channels and heterotetrameric channels that contain variable proportions of KCNA1, KCNA2, KCNA4, KCNA5, and possibly other family members as well; channel properties depend on the type of alpha subunits that are part of the channel. Channel properties are modulated by cytoplasmic beta subunits that regulate the subcellular location of the alpha subunits and promote rapid inactivation. Homotetrameric channels display rapid activation and slow inactivation. Required for normal electrical conduction including formation of the infranodal ventricular conduction system and normal action potential configuration, as a result of its interaction with XIRP2. May play a role in regulating the secretion of insulin in normal pancreatic islets. The protein is Potassium voltage-gated channel subfamily A member 5 (KCNA5) of Mustela putorius furo (European domestic ferret).